Here is a 137-residue protein sequence, read N- to C-terminus: Small ribosomal subunit protein uS12 (137 aa).

Positions 1 to 57 are disordered; it reads MPTINQLVRKPRKSKVEKSKSPALNVGYNSRKKVQTNVSSPQKRGVATRVGTMTPKK. A 3-methylthioaspartic acid modification is found at aspartate 102.

Belongs to the universal ribosomal protein uS12 family. As to quaternary structure, part of the 30S ribosomal subunit. Contacts proteins S8 and S17. May interact with IF1 in the 30S initiation complex.

Its function is as follows. With S4 and S5 plays an important role in translational accuracy. Interacts with and stabilizes bases of the 16S rRNA that are involved in tRNA selection in the A site and with the mRNA backbone. Located at the interface of the 30S and 50S subunits, it traverses the body of the 30S subunit contacting proteins on the other side and probably holding the rRNA structure together. The combined cluster of proteins S8, S12 and S17 appears to hold together the shoulder and platform of the 30S subunit. In Streptococcus suis (strain 98HAH33), this protein is Small ribosomal subunit protein uS12.